A 200-amino-acid chain; its full sequence is Dephospho-CoA kinase (200 aa).

In terms of domain architecture, DPCK spans 3-200 (VLGLTGSIGM…LSGKPAAATR (198 aa)). ATP is bound at residue 11–16 (GMGKTT).

It belongs to the CoaE family.

The protein localises to the cytoplasm. The enzyme catalyses 3'-dephospho-CoA + ATP = ADP + CoA + H(+). It functions in the pathway cofactor biosynthesis; coenzyme A biosynthesis; CoA from (R)-pantothenate: step 5/5. Functionally, catalyzes the phosphorylation of the 3'-hydroxyl group of dephosphocoenzyme A to form coenzyme A. This Brucella melitensis biotype 1 (strain ATCC 23456 / CCUG 17765 / NCTC 10094 / 16M) protein is Dephospho-CoA kinase.